The primary structure comprises 481 residues: G-protein coupled receptor 37-like 1 (481 aa).

A signal peptide spans Met-1 to Gly-24. The Extracellular portion of the chain corresponds to Ala-25–Met-134. Disordered regions lie at residues Leu-30–Glu-55 and Leu-76–Thr-107. The segment covering Thr-95 to Thr-107 has biased composition (polar residues). Asn-105 is a glycosylation site (N-linked (GlcNAc...) asparagine). Residues Leu-135–Val-155 traverse the membrane as a helical segment. Residues Trp-156–Ser-167 are Cytoplasmic-facing. Residues Ile-168–Ile-188 form a helical membrane-spanning segment. Topologically, residues Phe-189–Ala-205 are extracellular. A disulfide bridge links Cys-203 with Cys-286. A helical transmembrane segment spans residues Val-206–Ile-226. Residues Asp-227–Lys-251 lie on the Cytoplasmic side of the membrane. The helical transmembrane segment at Leu-252–Leu-272 threads the bilayer. Residues Ala-273 to Met-310 lie on the Extracellular side of the membrane. The chain crosses the membrane as a helical span at residues Trp-311 to Val-331. At Thr-332–Thr-360 the chain is on the cytoplasmic side. The helical transmembrane segment at Val-361 to Val-381 threads the bilayer. Residues Val-382 to Gly-398 lie on the Extracellular side of the membrane. The helical transmembrane segment at Leu-399–Ile-419 threads the bilayer. Residues Cys-420 to Cys-481 are Cytoplasmic-facing. Ser-471 is modified (phosphoserine). A Phosphothreonine modification is found at Thr-479.

It belongs to the G-protein coupled receptor 1 family. Interacts with the PTCH1 receptor. Post-translationally, undergoes metalloprotease-mediated cleavage which reduces its constitutive activity. In terms of processing, ubiquitinated. Highly expressed in brain.

The protein resides in the cell membrane. It is found in the cell projection. The protein localises to the cilium membrane. Its function is as follows. G-protein coupled receptor. Has been shown to bind the neuroprotective and glioprotective factor prosaposin (PSAP), leading to endocytosis followed by an ERK phosphorylation cascade. However, other studies have shown that prosaposin does not increase activity. It has been suggested that GPR37L1 is a constitutively active receptor which signals through the guanine nucleotide-binding protein G(s) subunit alpha. Participates in the regulation of postnatal cerebellar development by modulating the Shh pathway. Regulates baseline blood pressure in females and protects against cardiovascular stress in males. Mediates inhibition of astrocyte glutamate transporters and reduction in neuronal N-methyl-D-aspartate receptor activity. The chain is G-protein coupled receptor 37-like 1 (Gpr37l1) from Rattus norvegicus (Rat).